We begin with the raw amino-acid sequence, 394 residues long: Elongation factor Tu (394 aa).

The 195-residue stretch at Lys10 to Glu204 folds into the tr-type G domain. Residues Gly19–Thr26 form a G1 region. GTP is bound at residue Gly19–Thr26. Thr26 provides a ligand contact to Mg(2+). The tract at residues Gly60 to Asn64 is G2. A G3 region spans residues Asp81 to Gly84. GTP-binding positions include Asp81–His85 and Asn136–Asp139. Residues Asn136 to Asp139 are G4. Residues Ser174 to Leu176 form a G5 region.

It belongs to the TRAFAC class translation factor GTPase superfamily. Classic translation factor GTPase family. EF-Tu/EF-1A subfamily. As to quaternary structure, monomer.

It localises to the cytoplasm. It catalyses the reaction GTP + H2O = GDP + phosphate + H(+). GTP hydrolase that promotes the GTP-dependent binding of aminoacyl-tRNA to the A-site of ribosomes during protein biosynthesis. The protein is Elongation factor Tu of Ureaplasma parvum serovar 3 (strain ATCC 27815 / 27 / NCTC 11736).